The primary structure comprises 473 residues: Glutamate--tRNA ligase (473 aa).

The short motif at 11-21 (PSPTGFLHIGG) is the 'HIGH' region element. The 'KMSKS' region signature appears at 240 to 244 (KLSKR). K243 contacts ATP.

Belongs to the class-I aminoacyl-tRNA synthetase family. Glutamate--tRNA ligase type 1 subfamily. As to quaternary structure, monomer.

The protein resides in the cytoplasm. The catalysed reaction is tRNA(Glu) + L-glutamate + ATP = L-glutamyl-tRNA(Glu) + AMP + diphosphate. Its function is as follows. Catalyzes the attachment of glutamate to tRNA(Glu) in a two-step reaction: glutamate is first activated by ATP to form Glu-AMP and then transferred to the acceptor end of tRNA(Glu). This chain is Glutamate--tRNA ligase, found in Afipia carboxidovorans (strain ATCC 49405 / DSM 1227 / KCTC 32145 / OM5) (Oligotropha carboxidovorans).